Consider the following 397-residue polypeptide: MIIKPRVRGFICVTTHPAGCAASVREQIAYVARRGPIERGPKKVLVIGASTGYGLAARIAAAFGVGAATLGVFFERAPADAKPGTAGWYNSAAFHDEAAARGLQATSVNGDAFSDEIKHKTIDAIRRDLGQVDLVVYSVAAPRRTHPKTGVTHQSTLKPIGHAVRLRGIDTDNEAIKETLLQPATPDEIADTVAVMGGEDWRMWIDALDAAGVLADGAKTTAFTYLGEQVTHDIYWNGSIGEAKKDLDRTVLALRGKLAARGGDARVSVLKAVVTQASSAIPMMPLYLSLLFKVMKARSTHEGCIEQVDGLLRDSLYSAQPHVDAEGRLRADRLELDPAVQARVLELWDQVTDDNLYTLTDFAGYKAEFLRLFGFGIDGVDYDAPVEPNVRIPNLIE.

Residues 48–53, 74–75, 111–112, and 139–140 contribute to the NAD(+) site; these read GASTGY, FE, DA, and VA. A substrate-binding site is contributed by tyrosine 225. The active-site Proton donor is tyrosine 235. Residues lysine 244 and 273 to 275 contribute to the NAD(+) site; that span reads VVT.

Belongs to the TER reductase family. Monomer.

The enzyme catalyses a 2,3-saturated acyl-[ACP] + NAD(+) = a (2E)-enoyl-[ACP] + NADH + H(+). It participates in lipid metabolism; fatty acid biosynthesis. In terms of biological role, involved in the final reduction of the elongation cycle of fatty acid synthesis (FAS II). Catalyzes the reduction of a carbon-carbon double bond in an enoyl moiety that is covalently linked to an acyl carrier protein (ACP). This is Enoyl-[acyl-carrier-protein] reductase [NADH] from Burkholderia mallei (strain NCTC 10247).